A 137-amino-acid chain; its full sequence is MSDMEIRIRPVGVVRSPFKTRSDAPAQGRFSSEESEIHIFPEYLDAVDGLELFSHIFVLYWLHLAERNVLRVVPRGKRKKRGVFSTRAPARPNPVGLCLVELLECGEILRVRGLDALDGSPVIDIKPYYEDIDSLGF.

The 130-residue stretch at 8 to 137 (IRPVGVVRSP…YYEDIDSLGF (130 aa)) folds into the TsaA-like domain. Residues 25–27 (PAQ), 63–64 (HL), Arg87, Leu97, and 117–120 (LDGS) contribute to the S-adenosyl-L-methionine site.

It belongs to the tRNA methyltransferase O family.

This Methanothermobacter thermautotrophicus (strain ATCC 29096 / DSM 1053 / JCM 10044 / NBRC 100330 / Delta H) (Methanobacterium thermoautotrophicum) protein is Probable S-adenosyl-L-methionine-binding protein MTH_1797.